Here is a 72-residue protein sequence, read N- to C-terminus: MTKKAKNVEKVPFEDAMKRLEEIIDLMNQPTTSLEASLALYEEADQLMRICESRIQEVEARIKQLSDQRSES.

It belongs to the XseB family. In terms of assembly, heterooligomer composed of large and small subunits.

It is found in the cytoplasm. It carries out the reaction Exonucleolytic cleavage in either 5'- to 3'- or 3'- to 5'-direction to yield nucleoside 5'-phosphates.. Bidirectionally degrades single-stranded DNA into large acid-insoluble oligonucleotides, which are then degraded further into small acid-soluble oligonucleotides. The sequence is that of Exodeoxyribonuclease 7 small subunit from Chlamydia trachomatis serovar L2 (strain ATCC VR-902B / DSM 19102 / 434/Bu).